A 297-amino-acid polypeptide reads, in one-letter code: 4-diphosphocytidyl-2-C-methyl-D-erythritol kinase (297 aa).

Catalysis depends on residues Lys6 and Asp144.

This sequence belongs to the GHMP kinase family. IspE subfamily.

It catalyses the reaction 4-CDP-2-C-methyl-D-erythritol + ATP = 4-CDP-2-C-methyl-D-erythritol 2-phosphate + ADP + H(+). The protein operates within isoprenoid biosynthesis; isopentenyl diphosphate biosynthesis via DXP pathway; isopentenyl diphosphate from 1-deoxy-D-xylulose 5-phosphate: step 3/6. Catalyzes the phosphorylation of the position 2 hydroxy group of 4-diphosphocytidyl-2C-methyl-D-erythritol. The protein is 4-diphosphocytidyl-2-C-methyl-D-erythritol kinase of Leptospira interrogans serogroup Icterohaemorrhagiae serovar Lai (strain 56601).